Reading from the N-terminus, the 478-residue chain is MKMSIRTPPRLLELAGRSVLRDQALAMSTLEELPTELFPPLFMEAFSRRRCEALKLMVQAWPFRRLPLRPLIKMPCLETFQAVLNGLDALLTHGVRPRRWKLQVLDLQDVCENFWMVWSEAMARGCFLNAKRNKKPVQDCPRMRGRQPLTVFVELWLKNRTLDEHLTCLLLWVKQRKDLLHLCCKKLKILGMPFRNIRSILKMVNLDCIQEVEVNCKWVLPILTQFTPYLGHMRNLQKLVLSHMDVSRYVSPEQKKEIVTQFTTQFLKLHCLQKLYMNSVSFLEGHLDQLLSCLKTSLKVLTITNCVLLESDLKHLSQCPSISQLKTLDLSGIRLTNYSLVPLQILLEKVAATLEYLDLDDCGIIDSQVNAILPALSRCFELNTFSFCGNPISMATLENLLSHTIILKNLCLELYPAPRESYGADGTLCWSRFTQIRAELMKRVRDLRHPKRILFGTDYCPDCGNRSFYDLEADQYCC.

Residues Arg-99–Cys-126 form an LRR 1; degenerate repeat. One copy of the LRR 2; degenerate repeat lies at His-181–Asn-205. Residues Leu-206 to His-232 form an LRR 3; degenerate repeat. An LRR 4; degenerate repeat occupies Met-233–Lys-268. LRR repeat units lie at residues Leu-269–Leu-294, Lys-295–Lys-326, Thr-327–Leu-347, Ala-351–Arg-378, and Cys-379–His-403.

The protein belongs to the PRAME family.

This chain is PRAME family member 26, found in Homo sapiens (Human).